Here is a 268-residue protein sequence, read N- to C-terminus: Tetraspanin-33 (268 aa).

The Cytoplasmic segment spans residues 1–23; that stretch reads MVRKSPGSGKEEDFTFISPVVKY. A helical membrane pass occupies residues 24-44; the sequence is LLIFFNMLFWVISMVMVGIGV. At 45 to 63 the chain is on the extracellular side; the sequence is YARLLKHAEAAMACLAVDP. A helical transmembrane segment spans residues 64 to 84; that stretch reads ALLLIGVGILMFLITFCGCIG. The Cytoplasmic segment spans residues 85-95; it reads SLRENICLLQT. Residues 96–116 form a helical membrane-spanning segment; it reads FSICLTLVFLLQLAVGIVGFI. The Extracellular segment spans residues 117–226; it reads FSDKARGKVS…FIHTNGCIDR (110 aa). 4 cysteine pairs are disulfide-bonded: cysteine 155–cysteine 223, cysteine 156–cysteine 188, cysteine 172–cysteine 182, and cysteine 189–cysteine 202. 2 N-linked (GlcNAc...) asparagine glycosylation sites follow: asparagine 171 and asparagine 176. Residues 227-247 traverse the membrane as a helical segment; it reads LVNWIHSNLFLLGGVALGLAI. At 248 to 268 the chain is on the cytoplasmic side; sequence PQVTKHLRAKLIYTWRIGIQV.

This sequence belongs to the tetraspanin (TM4SF) family. As to quaternary structure, homodimer; disulfide-linked.

It is found in the cell membrane. The protein localises to the cell junction. The protein resides in the adherens junction. Its subcellular location is the cytoplasm. Part of TspanC8 subgroup, composed of 6 members that interact with the transmembrane metalloprotease ADAM10. This interaction is required for ADAM10 exit from the endoplasmic reticulum and for enzymatic maturation and trafficking to the cell surface as well as substrate specificity. Different TspanC8/ADAM10 complexes have distinct substrates. This Xenopus laevis (African clawed frog) protein is Tetraspanin-33 (tspan33).